We begin with the raw amino-acid sequence, 715 residues long: MKFKKKNYTSQVDEMDCGCAALSMILKSYGTEKSLASLRLLAGTTIEGTSALGIKKAGEGLGFVVQVLRADASLFEMKKVPYPFIAHVIKNQKYPHYYVITGANKNSVFIADPDPTVKMTKLSKEVFLSEWTGISLFLSPTPSYQPTKEKTSSLLSFIPIITRQKKVILNIVIASFIVTLINILGSYYLQSMIDSYIPNALMGTLGIISVGLLLTYIIQQVLEFAKAFLLNVLSQRLAIDVILSYIRHIFQLPMSFFSTRRTGEITSRFSDASSILDAIASTILSLFLDLTIVLMTGLILGLQNMQLFLLVLLAIPLYIVVIIIFTPLFERQNHEVMQTNAILNSSIIEDINGIETIKALASEQERYQKIDYEFASYLKEAFTLQQSEAIQTAIKTTVQLVLNVLILWFGATLVMHQKITLGQLITFNALLSYFTNPITNIINLQTKLQKARVANERLNEVYLVPSEFEEKKTELSLSHFNLNMSEISYQYGFGRKVLSEIKLSIKENEKLTIVGISGSGKSTLVKLLVNFFQPTSGTITLGGIDLQQFDKHQLRRLINYLPQQPYIFTGSIMDNLLLGASEATSQEEIIRAVELAEIRADIEQMQLGYQTELSSDASSLSGGQKQRIALARALLSPAKILILDEATSNLDMITEKKILKNLLALDKTIIFIAHRLSVAEMSHRIIVIEQGKVIESGSHSELLAQNGFYAQLYHN.

The Peptidase C39 domain maps to 11-138 (QVDEMDCGCA…SEWTGISLFL (128 aa)). Cysteine 17 is an active-site residue. 5 helical membrane passes run 167–187 (VILN…LGSY), 197–217 (IPNA…LTYI), 237–257 (LAID…MSFF), 282–302 (TILS…ILGL), and 307–327 (LFLL…IFTP). One can recognise an ABC transmembrane type-1 domain in the interval 168–450 (ILNIVIASFI…IINLQTKLQK (283 aa)). Residues 482-715 (LNMSEISYQY…NGFYAQLYHN (234 aa)) enclose the ABC transporter domain. 515-522 (GISGSGKS) contacts ATP.

This sequence belongs to the ABC transporter superfamily. HlyB family.

It is found in the cell membrane. Involved in the export process of a bacteriocin lactococcin. In Lactococcus lactis subsp. lactis (strain IL1403) (Streptococcus lactis), this protein is Lactococcin transport/processing ATP-binding protein LcnC-like (lcnC).